The following is a 169-amino-acid chain: Large ribosomal subunit protein uL10 (169 aa).

This sequence belongs to the universal ribosomal protein uL10 family. In terms of assembly, part of the ribosomal stalk of the 50S ribosomal subunit. The N-terminus interacts with L11 and the large rRNA to form the base of the stalk. The C-terminus forms an elongated spine to which L12 dimers bind in a sequential fashion forming a multimeric L10(L12)X complex.

Forms part of the ribosomal stalk, playing a central role in the interaction of the ribosome with GTP-bound translation factors. In Orientia tsutsugamushi (strain Ikeda) (Rickettsia tsutsugamushi), this protein is Large ribosomal subunit protein uL10.